A 352-amino-acid polypeptide reads, in one-letter code: Glucose-6-phosphatase catalytic subunit 1 (352 aa).

At 1 to 27 (MDLLHSWGVELAVYLQTRYGKYEGLFD) the chain is on the lumenal side. A helical membrane pass occupies residues 28-48 (LASTVADLHTTFFWLFPIWFH). Topologically, residues 49–56 (LRRDTALR) are cytoplasmic. The chain crosses the membrane as a helical span at residues 57–77 (LIWVAVIGDWLNLVLKWVLFG). Residues 78–113 (ERPYWWVHETKFYGAGPAPSLQQFPITCETGPGSPS) lie on the Lumenal side of the membrane. Residue Arg79 coordinates substrate. The helical transmembrane segment at 114-134 (GHAMGAAGVWYVMVTALLSIA) threads the bilayer. The active-site Proton donor is the His115. Residues 135 to 141 (REKQCPP) are Cytoplasmic-facing. The chain crosses the membrane as a helical span at residues 142–162 (LLYRFLYIGLWMLMGLVELVV). At 163–166 (CISR) the chain is on the lumenal side. Position 166 (Arg166) interacts with substrate. A helical membrane pass occupies residues 167 to 187 (VYMAAHFPHQVIAGIITGTLV). Residue His172 is the Nucleophile of the active site. Over 188-205 (AEVVSKEKWIYSASLKKY) the chain is Cytoplasmic. The helical transmembrane segment at 206–226 (FLITLFLTSFAVGFYVLLKAL) threads the bilayer. The Lumenal portion of the chain corresponds to 227–256 (DVDLLWTMEKAQKWCIRPEWVHLDSAPFAS). A helical transmembrane segment spans residues 257–276 (LLRNMGSLFGLGLGLHSPFY). Topologically, residues 277 to 289 (KTTKMRIMSAPLR) are cytoplasmic. A helical transmembrane segment spans residues 290–310 (IGCIVISVSLLHLLDGWTFSP). Residues 311–324 (ENHMTFYALSFGKS) lie on the Lumenal side of the membrane. The chain crosses the membrane as a helical span at residues 325 to 345 (AVALLIPTTLVPWALSKIYPV). The Cytoplasmic segment spans residues 346–352 (KTEGKNL). A Prevents secretion from ER motif is present at residues 349–352 (GKNL).

Belongs to the glucose-6-phosphatase family.

The protein resides in the endoplasmic reticulum membrane. It catalyses the reaction D-glucose 6-phosphate + H2O = D-glucose + phosphate. Its pathway is carbohydrate biosynthesis; gluconeogenesis. Hydrolyzes glucose-6-phosphate to glucose in the endoplasmic reticulum. Forms with the glucose-6-phosphate transporter (SLC37A4/G6PT) the complex responsible for glucose production in the terminal step of glycogenolysis and gluconeogenesis. Hence, it is the key enzyme in homeostatic regulation of blood glucose levels. The sequence is that of Glucose-6-phosphatase catalytic subunit 1 (g6pc1) from Haplochromis nubilus (Blue Victoria mouthbrooder).